A 1027-amino-acid polypeptide reads, in one-letter code: Transient-receptor-potential-like protein (1027 aa).

The segment at 1–22 is disordered; sequence MTKEGMLSAAGRRFSRCAPSPR. ANK repeat units follow at residues 85–115, 117–141, and 163–192; these read MGRTALEIAVDNENMEVVELLLQQPDIRIGN, LLCAIREGVYRLVEVLVNHPNITRE, and SDISPVILAAQLNQFEILQMLIRKDASIEK. Helical transmembrane passes span 355–375, 391–411, 473–493, 516–536, 559–579, and 640–660; these read FFLYAFLLFLWPIFCLMYILM, FFYYSVSFATFLGLLTWATFE, FLMICLYLCTISIRLSAYYIF, VAEALFAVGNVFSFARIIYLF, FCFIFVLIISSFSIGLAQLYW, and MFIMYHCTSIIVLLNMLIAMM. 2 disordered regions span residues 825–929 and 1008–1027; these read KRDI…TYTS and ENVKSPSPASHSHVGFNVEK. The segment covering 855–874 has biased composition (acidic residues); sequence EESEEDDKSDETSSTDEEAD. A compositionally biased stretch (basic and acidic residues) spans 910-923; that stretch reads RASEADSKLPDRPL. The segment covering 1008-1017 has biased composition (polar residues); sequence ENVKSPSPAS.

This sequence belongs to the transient receptor (TC 1.A.4) family. STrpC subfamily.

Its subcellular location is the membrane. Functionally, could mediate calcium entry and form a calcium permeant channel. The sequence is that of Transient-receptor-potential-like protein (trp-1) from Caenorhabditis elegans.